Consider the following 423-residue polypeptide: Adenylosuccinate synthetase (423 aa).

Asp-12 acts as the Proton acceptor in catalysis. 2 residues coordinate Mg(2+): Asp-12 and Gly-39. IMP contacts are provided by residues 37-40 (NAGH), Thr-129, Arg-143, Asn-221, Thr-236, and Arg-300. 39 to 41 (GHS) lines the GTP pocket. The active-site Proton donor is His-40. Position 296 to 302 (296 to 302 (VSTGRKR)) interacts with substrate. Residues Arg-302, 328–330 (KLD), and 412–414 (GTG) contribute to the GTP site.

The protein belongs to the adenylosuccinate synthetase family. Homodimer. It depends on Mg(2+) as a cofactor.

It localises to the cytoplasm. It carries out the reaction IMP + L-aspartate + GTP = N(6)-(1,2-dicarboxyethyl)-AMP + GDP + phosphate + 2 H(+). The protein operates within purine metabolism; AMP biosynthesis via de novo pathway; AMP from IMP: step 1/2. Functionally, plays an important role in the de novo pathway and in the salvage pathway of purine nucleotide biosynthesis. Catalyzes the first committed step in the biosynthesis of AMP from IMP. This is Adenylosuccinate synthetase from Pyricularia oryzae (strain 70-15 / ATCC MYA-4617 / FGSC 8958) (Rice blast fungus).